The sequence spans 403 residues: Peroxisomal membrane protein PEX13 (403 aa).

The segment covering 1–11 has biased composition (pro residues); it reads MASQPPPPPKP. Residues 1 to 68 are disordered; sequence MASQPPPPPK…PSQQTGSSSV (68 aa). At 1–134 the chain is on the peroxisomal matrix side; it reads MASQPPPPPK…SSRGAFQSIE (134 aa). Over residues 59-68 the composition is skewed to polar residues; sequence PSQQTGSSSV. The helical transmembrane segment at 135-155 threads the bilayer; that stretch reads SIVHAFASVSMMMDATFSAVY. Positions 145 to 233 are targeting to peroxisomes; that stretch reads MMMDATFSAV…EDRAATSAKS (89 aa). Residues 156–174 are Cytoplasmic-facing; the sequence is NSFRAVLDVANHFSRLKIH. A helical membrane pass occupies residues 175-192; it reads FTKVFSAFALVRTIRYLY. The interaction with PEX19 stretch occupies residues 175–196; that stretch reads FTKVFSAFALVRTIRYLYRRLQ. At 193–233 the chain is on the peroxisomal matrix side; sequence RRLQRMLGLRRGSENEDLWAESEGTVACLGAEDRAATSAKS. The chain crosses the membrane as a helical span at residues 234–254; it reads WPIFLFFAVILGGPYLIWKLL. At 255–403 the chain is on the cytoplasmic side; that stretch reads STHSDEVTDS…IGKDGEKQDL (149 aa). Residues 272-336 form the SH3 domain; the sequence is DDHVVARAEY…PANYVKILGK (65 aa). A Phosphoserine modification is found at serine 354.

It belongs to the peroxin-13 family. In terms of assembly, interacts (via SH3 domain) with PEX14 (via SH3-binding motif); forming the PEX13-PEX14 docking complex. Interacts with PEX19.

It localises to the peroxisome membrane. Its function is as follows. Component of the PEX13-PEX14 docking complex, a translocon channel that specifically mediates the import of peroxisomal cargo proteins bound to PEX5 receptor. The PEX13-PEX14 docking complex forms a large import pore which can be opened to a diameter of about 9 nm. Mechanistically, PEX5 receptor along with cargo proteins associates with the PEX14 subunit of the PEX13-PEX14 docking complex in the cytosol, leading to the insertion of the receptor into the organelle membrane with the concomitant translocation of the cargo into the peroxisome matrix. Involved in the import of PTS1- and PTS2-type containing proteins. The protein is Peroxisomal membrane protein PEX13 of Homo sapiens (Human).